The primary structure comprises 131 residues: MQGNLPPEAQEKIEELQDLQETAQQVAQQKQQAETQLRESETALETLDDIEGDTQMYQEVGELLIETDYDEAYENLEEKVDSLEVRVETLTKQEERVQDQFEGLQEELQEMLQGGAGGGPMGPGGPGAGGA.

Disordered stretches follow at residues Leu-19 to Glu-41 and Leu-112 to Ala-131. A compositionally biased stretch (low complexity) spans Gln-20 to Thr-35. Gly residues predominate over residues Gly-114–Ala-131.

The protein belongs to the prefoldin subunit beta family. Heterohexamer of two alpha and four beta subunits.

The protein localises to the cytoplasm. In terms of biological role, molecular chaperone capable of stabilizing a range of proteins. Seems to fulfill an ATP-independent, HSP70-like function in archaeal de novo protein folding. The chain is Prefoldin subunit beta from Natronomonas pharaonis (strain ATCC 35678 / DSM 2160 / CIP 103997 / JCM 8858 / NBRC 14720 / NCIMB 2260 / Gabara) (Halobacterium pharaonis).